Reading from the N-terminus, the 412-residue chain is Short-chain specific acyl-CoA dehydrogenase, mitochondrial (412 aa).

Residues 1–24 (MAATLLARACGLVRGAPWPWGWRR) constitute a mitochondrion transit peptide. Threonine 27 carries the post-translational modification Phosphothreonine. The residue at position 51 (lysine 51) is an N6-acetyllysine; alternate. The residue at position 51 (lysine 51) is an N6-succinyllysine; alternate. Position 72 is an N6-acetyllysine (lysine 72). At lysine 129 the chain carries N6-acetyllysine; alternate. Lysine 129 carries the N6-succinyllysine; alternate modification. FAD is bound by residues 152 to 161 (FALSEPGNGS) and 185 to 187 (WIT). A substrate-binding site is contributed by serine 161. An N6-acetyllysine modification is found at lysine 208. Lysine 262 bears the N6-acetyllysine; alternate mark. At lysine 262 the chain carries N6-succinyllysine; alternate. 269–272 (DTGR) is a substrate binding site. Arginine 297 provides a ligand contact to FAD. At lysine 306 the chain carries N6-acetyllysine; alternate. Lysine 306 is modified (N6-succinyllysine; alternate). FAD contacts are provided by residues glutamine 308 and 365–369 (QILGG). Glutamate 392 serves as the catalytic Proton acceptor. Glycine 393 lines the substrate pocket. Position 394–396 (394–396 (TSE)) interacts with FAD.

It belongs to the acyl-CoA dehydrogenase family. As to quaternary structure, homotetramer. It depends on FAD as a cofactor.

Its subcellular location is the mitochondrion matrix. The enzyme catalyses a short-chain 2,3-saturated fatty acyl-CoA + oxidized [electron-transfer flavoprotein] + H(+) = a short-chain (2E)-enoyl-CoA + reduced [electron-transfer flavoprotein]. It catalyses the reaction butanoyl-CoA + oxidized [electron-transfer flavoprotein] + H(+) = (2E)-butenoyl-CoA + reduced [electron-transfer flavoprotein]. It carries out the reaction pentanoyl-CoA + oxidized [electron-transfer flavoprotein] + H(+) = (2E)-pentenoyl-CoA + reduced [electron-transfer flavoprotein]. The catalysed reaction is hexanoyl-CoA + oxidized [electron-transfer flavoprotein] + H(+) = (2E)-hexenoyl-CoA + reduced [electron-transfer flavoprotein]. It functions in the pathway lipid metabolism; mitochondrial fatty acid beta-oxidation. Short-chain specific acyl-CoA dehydrogenase is one of the acyl-CoA dehydrogenases that catalyze the first step of mitochondrial fatty acid beta-oxidation, an aerobic process breaking down fatty acids into acetyl-CoA and allowing the production of energy from fats. The first step of fatty acid beta-oxidation consists in the removal of one hydrogen from C-2 and C-3 of the straight-chain fatty acyl-CoA thioester, resulting in the formation of trans-2-enoyl-CoA. Among the different mitochondrial acyl-CoA dehydrogenases, short-chain specific acyl-CoA dehydrogenase acts specifically on acyl-CoAs with saturated 4 to 6 carbons long primary chains. The protein is Short-chain specific acyl-CoA dehydrogenase, mitochondrial (ACADS) of Bos taurus (Bovine).